The following is a 617-amino-acid chain: ATP-dependent zinc metalloprotease FtsH (617 aa).

Topologically, residues 1–7 (MKIPFDR) are cytoplasmic. Residues 8–28 (WLGWPTLLLLLLGLWLLGSSL) traverse the membrane as a helical segment. The Periplasmic portion of the chain corresponds to 29–102 (RDQRTVEAVP…VSYRRVRESN (74 aa)). The helical transmembrane segment at 103–123 (WLSQLLSWMAGPLLLLGFWYF) threads the bilayer. Residues 124–617 (MSRRIDGQQG…GRPAAIRQVA (494 aa)) lie on the Cytoplasmic side of the membrane. Residue 198-205 (GPTGTGKT) participates in ATP binding. Histidine 421 is a binding site for Zn(2+). Glutamate 422 is a catalytic residue. Zn(2+) contacts are provided by histidine 425 and aspartate 498.

The protein in the central section; belongs to the AAA ATPase family. In the C-terminal section; belongs to the peptidase M41 family. As to quaternary structure, homohexamer. The cofactor is Zn(2+).

It is found in the cell inner membrane. In terms of biological role, acts as a processive, ATP-dependent zinc metallopeptidase for both cytoplasmic and membrane proteins. Plays a role in the quality control of integral membrane proteins. This is ATP-dependent zinc metalloprotease FtsH from Methylibium petroleiphilum (strain ATCC BAA-1232 / LMG 22953 / PM1).